The chain runs to 122 residues: Large ribosomal subunit protein uL14c (122 aa).

The protein belongs to the universal ribosomal protein uL14 family. Part of the 50S ribosomal subunit.

It localises to the plastid. The protein localises to the chloroplast. Binds to 23S rRNA. This chain is Large ribosomal subunit protein uL14c, found in Liriodendron tulipifera (Tuliptree).